The following is a 375-amino-acid chain: Digeranylgeranylglycerophospholipid reductase 1 (375 aa).

FAD contacts are provided by A13, E32, C43, A44, G46, R92, A116, D275, G287, and L288. G367 contributes to the a 2,3-bis-O-(geranylgeranyl)-sn-glycerol 1-phospholipid binding site.

Belongs to the geranylgeranyl reductase family. DGGGPL reductase subfamily. It depends on FAD as a cofactor.

It carries out the reaction a 2,3-bis-O-phytanyl-sn-glycerol 1-phospholipid + 8 A = a 2,3-bis-O-(geranylgeranyl)-sn-glycerol 1-phospholipid + 8 AH2. The catalysed reaction is 2,3-bis-O-(phytanyl)-sn-glycerol 1-phosphate + 8 A = 2,3-bis-O-(geranylgeranyl)-sn-glycerol 1-phosphate + 8 AH2. The enzyme catalyses CDP-2,3-bis-O-(geranylgeranyl)-sn-glycerol + 8 AH2 = CDP-2,3-bis-O-(phytanyl)-sn-glycerol + 8 A. It catalyses the reaction archaetidylserine + 8 AH2 = 2,3-bis-O-phytanyl-sn-glycero-3-phospho-L-serine + 8 A. It functions in the pathway membrane lipid metabolism; glycerophospholipid metabolism. Functionally, is involved in the reduction of 2,3-digeranylgeranylglycerophospholipids (unsaturated archaeols) into 2,3-diphytanylglycerophospholipids (saturated archaeols) in the biosynthesis of archaeal membrane lipids. Catalyzes the formation of archaetidic acid (2,3-di-O-phytanyl-sn-glyceryl phosphate) from 2,3-di-O-geranylgeranylglyceryl phosphate (DGGGP) via the hydrogenation of each double bond of the isoprenoid chains. Is also probably able to reduce double bonds of geranyl groups in CDP-2,3-bis-O-(geranylgeranyl)-sn-glycerol and archaetidylserine, thus acting at various stages in the biosynthesis of archaeal membrane lipids. This chain is Digeranylgeranylglycerophospholipid reductase 1, found in Methanopyrus kandleri (strain AV19 / DSM 6324 / JCM 9639 / NBRC 100938).